The sequence spans 987 residues: UPF0182 protein Lxx09300 (987 aa).

7 consecutive transmembrane segments (helical) span residues 17–37 (VWTT…FAGL), 59–79 (AAIA…WVVI), 108–128 (RLAM…SAAS), 167–187 (VGFA…TCYL), 206–226 (VQIS…VWLD), 256–276 (AVLA…AFTG), and 283–303 (VGTA…PWAI). 2 disordered regions span residues 700 to 719 (RDDA…DPTL) and 886 to 947 (TAGD…ALQQ). The segment covering 705 to 719 (TTPNDPTSSPTDPTL) has biased composition (low complexity). Gly residues predominate over residues 897–932 (GGSGGGSSGDAGSSAGGGSSGGGGSSAGGSSSGSGS). Over residues 933 to 947 (SGTQSNAALQRALQQ) the composition is skewed to low complexity.

The protein belongs to the UPF0182 family.

Its subcellular location is the cell membrane. The sequence is that of UPF0182 protein Lxx09300 from Leifsonia xyli subsp. xyli (strain CTCB07).